We begin with the raw amino-acid sequence, 98 residues long: uncharacterized protein (98 aa).

This is an uncharacterized protein from Rickettsia prowazekii (strain Madrid E).